The chain runs to 313 residues: Ribosomal RNA small subunit methyltransferase H (313 aa).

S-adenosyl-L-methionine is bound by residues 31–33, aspartate 51, phenylalanine 77, aspartate 95, and glutamine 102; that span reads GGH.

Belongs to the methyltransferase superfamily. RsmH family.

It is found in the cytoplasm. The catalysed reaction is cytidine(1402) in 16S rRNA + S-adenosyl-L-methionine = N(4)-methylcytidine(1402) in 16S rRNA + S-adenosyl-L-homocysteine + H(+). In terms of biological role, specifically methylates the N4 position of cytidine in position 1402 (C1402) of 16S rRNA. The sequence is that of Ribosomal RNA small subunit methyltransferase H from Xylella fastidiosa (strain M12).